A 299-amino-acid chain; its full sequence is MKHISVLLNESIEGLNIKPNGIYVDATLGGGGHSLEILKKLDKGHLYAFDQDAYAIGRATERLKDFSNKTFIQSNFSFIKEKLNELGIYQVDGIIFDLGLSSFQIDDETRGFSYLKDYDLDMRMNKDATLTAKEIVNTYERQKLADIFRAYGDEENAWKIAGMIVDRRPLNTTLELVEITDIANKGMKGHSAKRVFQALRIEVNKELEVLERALNSALELLNIGGRLSIITFQSLEDKMVKSFYKTHSQMDYPKNIDIRTFPKPPLKIITRKPVLPSEIELEHNSRSRSAKLRIAEKQS.

S-adenosyl-L-methionine contacts are provided by residues 31–33 (GGH), Asp-50, Phe-76, Asp-97, and Gln-104.

This sequence belongs to the methyltransferase superfamily. RsmH family.

The protein resides in the cytoplasm. The enzyme catalyses cytidine(1402) in 16S rRNA + S-adenosyl-L-methionine = N(4)-methylcytidine(1402) in 16S rRNA + S-adenosyl-L-homocysteine + H(+). In terms of biological role, specifically methylates the N4 position of cytidine in position 1402 (C1402) of 16S rRNA. The chain is Ribosomal RNA small subunit methyltransferase H 1 from Acholeplasma laidlawii (strain PG-8A).